Here is a 114-residue protein sequence, read N- to C-terminus: MNNKEKGDFGEKVAVNYLLSKGAKILEKNYRLKIGEIDIIAKMEDEIIFVEVKSRSNIKFGYPCESVSFKKRKKIIGVASYYIIKNNLNNTPIRFDVIEVYLLEKRINHIMNAF.

This sequence belongs to the UPF0102 family.

The protein is UPF0102 protein CD630_12710 of Clostridioides difficile (strain 630) (Peptoclostridium difficile).